Consider the following 156-residue polypeptide: Hemerythrin-like protein (156 aa).

H54, H84, E88, H109, H113, H142, and D147 together coordinate Fe cation.

The protein belongs to the hemerythrin family.

Its function is as follows. Oxygen-binding protein. The oxygen-binding site contains two iron atoms. The sequence is that of Hemerythrin-like protein from Nematostella vectensis (Starlet sea anemone).